Reading from the N-terminus, the 120-residue chain is MTNFIPSLTDWHALHALSITMLDLAHSGKWDELIEQEMNYVQLVEGIARNPISPGNTFLINQAKEILNAVLRNEAELKTLLQHRMEELRQLIDQTGKQQSVSTTYGNLAGNILFPSNLNQ.

Residues 1-50 (MTNFIPSLTDWHALHALSITMLDLAHSGKWDELIEQEMNYVQLVEGIARN) form a required for homodimerization region. Residues 59–97 (LINQAKEILNAVLRNEAELKTLLQHRMEELRQLIDQTGK) form a fliD binding region.

It belongs to the FliT family. As to quaternary structure, homodimer. Interacts with FliD and FlhC.

It is found in the cytoplasm. It localises to the cytosol. In terms of biological role, dual-function protein that regulates the transcription of class 2 flagellar operons and that also acts as an export chaperone for the filament-capping protein FliD. As a transcriptional regulator, acts as an anti-FlhDC factor; it directly binds FlhC, thus inhibiting the binding of the FlhC/FlhD complex to class 2 promoters, resulting in decreased expression of class 2 flagellar operons. As a chaperone, effects FliD transition to the membrane by preventing its premature polymerization, and by directing it to the export apparatus. This Citrobacter koseri (strain ATCC BAA-895 / CDC 4225-83 / SGSC4696) protein is Flagellar protein FliT.